Reading from the N-terminus, the 387-residue chain is Patatin-08 (387 aa).

Positions 1-23 are cleaved as a signal peptide; that stretch reads MATTKSFLILIVMILATTSSTFA. The PNPLA domain occupies 32–230; that stretch reads LSIDGGGIKG…TVADPALLSI (199 aa). The GXGXXG signature appears at 36-41; sequence GGGIKG. Residues 75–79 carry the GXSXG motif; that stretch reads GTSTG. Serine 77 serves as the catalytic Nucleophile. Residue asparagine 115 is glycosylated (N-linked (GlcNAc...) asparagine). Aspartate 216 (proton acceptor) is an active-site residue. The short motif at 216-218 is the DGA/G element; it reads DGA. The stretch at 361-385 forms a coiled coil; that stretch reads ETYEEALKRFAKLLSDRKKLRANKA.

The protein belongs to the patatin family. In terms of tissue distribution, tuber.

It is found in the vacuole. Probable lipolytic acyl hydrolase (LAH), an activity which is thought to be involved in the response of tubers to pathogens. The polypeptide is Patatin-08 (Solanum tuberosum (Potato)).